Consider the following 542-residue polypeptide: Multidrug transporter DTR1 (542 aa).

2 N-linked (GlcNAc...) asparagine glycosylation sites follow: Asn-6 and Asn-46. Residues 80–100 (LIFLIVIYNGFLGPLAGNVFI) form a helical membrane-spanning segment. Asn-111 and Asn-118 each carry an N-linked (GlcNAc...) asparagine glycan. 5 consecutive transmembrane segments (helical) span residues 119-139 (ATVS…GALA), 146-166 (ILYI…ASVP), 169-189 (IGSL…VISL), 210-230 (FMLG…LILL), and 237-257 (WLFG…ILLL). N-linked (GlcNAc...) asparagine glycosylation occurs at Asn-274. 4 consecutive transmembrane segments (helical) span residues 332-352 (IMTF…FCTY), 374-394 (IGAC…IGGH), 419-439 (ILTV…GWCI), and 441-461 (FHYH…GLTW). An N-linked (GlcNAc...) asparagine glycan is attached at Asn-463. 2 consecutive transmembrane segments (helical) span residues 481 to 501 (AIAV…ALIA) and 511 to 531 (FCFL…LVLI).

Belongs to the major facilitator superfamily. CAR1 family.

It is found in the cell membrane. Plasma membrane acetic acid exporter, relieving the stress induced upon cells within hemocytes, and thus enabling increased proliferation and virulence against Galleria mellonella larvae. Confers resistance to weak acid and oxidative stress, but not to antifungal drugs. The polypeptide is Multidrug transporter DTR1 (Candida glabrata (strain ATCC 2001 / BCRC 20586 / JCM 3761 / NBRC 0622 / NRRL Y-65 / CBS 138) (Yeast)).